Consider the following 3977-residue polypeptide: Hybrid PKS-NRPS synthetase gkaA (3977 aa).

One can recognise a Ketosynthase family 3 (KS3) domain in the interval 4–441; that stretch reads EEPIAVIGSG…GTNAHVILEN (438 aa). Residues cysteine 177, histidine 316, and histidine 361 each act as for beta-ketoacyl synthase activity in the active site. One can recognise a Malonyl-CoA:ACP transacylase (MAT) domain in the interval 551–867; sequence VFTGQGAQWP…TGVIHRGKND (317 aa). Residues 937 to 1072 are N-terminal hotdog fold; that stretch reads NPLLGTRTTD…GRITVTLGES (136 aa). Residues 937-1241 form the PKS/mFAS DH domain; sequence NPLLGTRTTD…VVAFSEATAD (305 aa). Residue histidine 969 is the Proton acceptor; for dehydratase activity of the active site. The tract at residues 1087-1241 is C-terminal hotdog fold; the sequence is LVSIPQDRFY…VVAFSEATAD (155 aa). Aspartate 1147 functions as the Proton donor; for dehydratase activity in the catalytic mechanism. The segment at 1286–1580 is methyltransferase (cMeT) domain; the sequence is YMKKTVEEFP…FSGIDSSTPE (295 aa). The 174-residue stretch at 2128-2301 folds into the Ketoreductase (KR) domain; sequence TYVLFGLTSD…AASILHIGAV (174 aa). A Carrier 1 domain is found at 2409 to 2490; that stretch reads SEVFEIISGA…QLLEYAIDNM (82 aa). Serine 2450 bears the O-(pantetheine 4'-phosphoryl)serine mark. Residues 2497–2542 are disordered; it reads HSNGEQGTVSDSGSTNIQLTPASTPSVPSVNLASDSTGSSQVGEDV. Residues 2499–2538 are compositionally biased toward polar residues; sequence NGEQGTVSDSGSTNIQLTPASTPSVPSVNLASDSTGSSQV. The segment at 2584–3018 is condensation; the sequence is EKIIPMSPGQ…LKDISLFSKE (435 aa). The adenylation stretch occupies residues 3048-3437; sequence IAEHPDTISI…GALEILGRID (390 aa). The 81-residue stretch at 3552 to 3632 folds into the Carrier 2 domain; that stretch reads FSLTPTEDKL…AMASLITPAS (81 aa). Serine 3592 carries the O-(pantetheine 4'-phosphoryl)serine modification. The Thioester reductase (TE) domain maps to 3672–3890; it reads LTGATGFLGH…FVDLVSVQNV (219 aa).

It in the C-terminal section; belongs to the NRP synthetase family. The cofactor is pantetheine 4'-phosphate.

Its pathway is mycotoxin biosynthesis. Functionally, hybrid PKS-NRPS synthetase; part of the gene cluster that mediates the biosynthesis of GKK1032, fungal natural products containing a macrocyclic para-cyclophane connected to a decahydrofluorene ring system that show potent antitumor activities. Within the pathway, the PKS-NRPS gkaA, with the help of the trans-enoyl reductase gkaC, synthesize the polyketide-tyrosyl acyl thioester product which can be reductively off-loaded by the terminal reductase (R) domain in gkaA. The PKS module of gkaA acts in combination with the trans-acting enoyl reductase gkaC to produce a methylated polyketide attached to the ACP domain. In parallel, the adenylation (A) domain of the NRPS module activated L-tyrosine, which is then transferred to the ACP domain. The condensation (C) domain subsequently links this group to the polyketide chain, forming an enzyme-bound amide. The alpha/beta hydrolase gkaG is then required to catalyze the subsequent Knoevenagel condensation that affords the 3-pyrrolin-2-one ring, whereas the three proteins gkaB, gkadX and gkaZ then function synergistically to form the cyclophane. The protein is Hybrid PKS-NRPS synthetase gkaA of Penicillium citrinum.